The primary structure comprises 188 residues: Peptidyl-prolyl cis-trans isomerase (188 aa).

Positions 1 to 20 (MLKRVAIVLGGLLISAHALA) are cleaved as a signal peptide. A PPIase cyclophilin-type domain is found at 21 to 181 (NTMVEMKTNL…QPVKIISVQI (161 aa)).

The protein belongs to the cyclophilin-type PPIase family.

The protein localises to the periplasm. It catalyses the reaction [protein]-peptidylproline (omega=180) = [protein]-peptidylproline (omega=0). In terms of biological role, PPIases accelerate the folding of proteins. It catalyzes the cis-trans isomerization of proline imidic peptide bonds in oligopeptides. This protein is not essential for growth. Presumably plays a role in signal transduction. This is Peptidyl-prolyl cis-trans isomerase (rotA) from Acinetobacter baylyi (strain ATCC 33305 / BD413 / ADP1).